We begin with the raw amino-acid sequence, 385 residues long: 1-deoxy-D-xylulose 5-phosphate reductoisomerase (385 aa).

The NADPH site is built by T10, G11, S12, I13, K37, and N124. K125 is a binding site for 1-deoxy-D-xylulose 5-phosphate. An NADPH-binding site is contributed by E126. D150 provides a ligand contact to Mn(2+). 1-deoxy-D-xylulose 5-phosphate is bound by residues S151, E152, S176, and H199. E152 contacts Mn(2+). G205 lines the NADPH pocket. Residues S212, N217, K218, and E221 each contribute to the 1-deoxy-D-xylulose 5-phosphate site. E221 is a Mn(2+) binding site.

The protein belongs to the DXR family. The cofactor is Mg(2+). Requires Mn(2+) as cofactor.

The catalysed reaction is 2-C-methyl-D-erythritol 4-phosphate + NADP(+) = 1-deoxy-D-xylulose 5-phosphate + NADPH + H(+). The protein operates within isoprenoid biosynthesis; isopentenyl diphosphate biosynthesis via DXP pathway; isopentenyl diphosphate from 1-deoxy-D-xylulose 5-phosphate: step 1/6. Its function is as follows. Catalyzes the NADPH-dependent rearrangement and reduction of 1-deoxy-D-xylulose-5-phosphate (DXP) to 2-C-methyl-D-erythritol 4-phosphate (MEP). The sequence is that of 1-deoxy-D-xylulose 5-phosphate reductoisomerase from Clostridium botulinum (strain 657 / Type Ba4).